Here is a 336-residue protein sequence, read N- to C-terminus: D-alanine--D-alanine ligase (336 aa).

The region spanning 124–330 is the ATP-grasp domain; that stretch reads KMWFSALGIP…FTQYLSLVIN (207 aa). Position 154–209 (154–209) interacts with ATP; it reads ALEKWGSIFVKAASQGSSVGCYKVDEASKVLGVLKDAFGYAPYVIVEKTIKARELE. The Mg(2+) site is built by aspartate 284, glutamate 297, and asparagine 299.

This sequence belongs to the D-alanine--D-alanine ligase family. Mg(2+) serves as cofactor. Mn(2+) is required as a cofactor.

The protein localises to the cytoplasm. It catalyses the reaction 2 D-alanine + ATP = D-alanyl-D-alanine + ADP + phosphate + H(+). The protein operates within cell wall biogenesis; peptidoglycan biosynthesis. Its function is as follows. Cell wall formation. This is D-alanine--D-alanine ligase from Shewanella oneidensis (strain ATCC 700550 / JCM 31522 / CIP 106686 / LMG 19005 / NCIMB 14063 / MR-1).